The following is a 197-amino-acid chain: Holliday junction branch migration complex subunit RuvA (197 aa).

The domain I stretch occupies residues 1–64 (MIASIRGILI…EDSLTLYGFE (64 aa)). The interval 65-145 (TVEQRQLFET…GLPTGAAVTP (81 aa)) is domain II. The flexible linker stretch occupies residues 146–148 (AVA). The tract at residues 148 to 197 (AAANAELSEALISLGFTDAEAAAAIAALPSDAPPDLEERVRLALRYFSAS) is domain III.

The protein belongs to the RuvA family. As to quaternary structure, homotetramer. Forms an RuvA(8)-RuvB(12)-Holliday junction (HJ) complex. HJ DNA is sandwiched between 2 RuvA tetramers; dsDNA enters through RuvA and exits via RuvB. An RuvB hexamer assembles on each DNA strand where it exits the tetramer. Each RuvB hexamer is contacted by two RuvA subunits (via domain III) on 2 adjacent RuvB subunits; this complex drives branch migration. In the full resolvosome a probable DNA-RuvA(4)-RuvB(12)-RuvC(2) complex forms which resolves the HJ.

The protein localises to the cytoplasm. Functionally, the RuvA-RuvB-RuvC complex processes Holliday junction (HJ) DNA during genetic recombination and DNA repair, while the RuvA-RuvB complex plays an important role in the rescue of blocked DNA replication forks via replication fork reversal (RFR). RuvA specifically binds to HJ cruciform DNA, conferring on it an open structure. The RuvB hexamer acts as an ATP-dependent pump, pulling dsDNA into and through the RuvAB complex. HJ branch migration allows RuvC to scan DNA until it finds its consensus sequence, where it cleaves and resolves the cruciform DNA. This chain is Holliday junction branch migration complex subunit RuvA, found in Roseiflexus sp. (strain RS-1).